The sequence spans 309 residues: Probable RuBisCO transcriptional regulator (309 aa).

The HTH lysR-type domain occupies 5–62 (FTLQQLRILKAIATEKSFTRAAEVLFVSQPSLSKQIKTLESRLNISLLNRENNIVSLT). The segment at residues 22–41 (FTRAAEVLFVSQPSLSKQIK) is a DNA-binding region (H-T-H motif).

It belongs to the LysR transcriptional regulatory family.

It is found in the plastid. Its subcellular location is the chloroplast. Functionally, trans-acting transcriptional regulator of RuBisCO genes (rbcL and rbcS) expression. The polypeptide is Probable RuBisCO transcriptional regulator (rbcR) (Trieres chinensis (Marine centric diatom)).